The primary structure comprises 395 residues: Enolase (395 aa).

Substrate is bound by residues His-136 and Glu-145. The active-site Proton donor is Glu-188. Mg(2+) contacts are provided by Asp-223, Glu-271, and Asp-296. Substrate contacts are provided by Glu-271 and Asp-296. Lys-321 (proton acceptor) is an active-site residue. Residues 348–351 and Lys-372 contribute to the substrate site; that span reads SHRS.

Belongs to the enolase family. Homodimer. It depends on Mg(2+) as a cofactor.

The protein localises to the cytoplasm. It carries out the reaction (2R)-2-phosphoglycerate = phosphoenolpyruvate + H2O. It functions in the pathway carbohydrate degradation; glycolysis; pyruvate from D-glyceraldehyde 3-phosphate: step 4/5. This chain is Enolase, found in Alligator mississippiensis (American alligator).